Consider the following 110-residue polypeptide: Iron-sulfur cluster assembly protein CyaY (110 aa).

This sequence belongs to the frataxin family.

Its function is as follows. Involved in iron-sulfur (Fe-S) cluster assembly. May act as a regulator of Fe-S biogenesis. In Ectopseudomonas mendocina (strain ymp) (Pseudomonas mendocina), this protein is Iron-sulfur cluster assembly protein CyaY.